The following is a 366-amino-acid chain: Left-right determination factor 1 (366 aa).

The N-terminal stretch at 1–21 is a signal peptide; the sequence is MQPLWLCWALWVLPLASPGAA. Positions 22–76 are cleaved as a propeptide — or 135; it reads LTGEQLLGSLLRQLQLKEVPTLDRADMEELVIPTHVRAQYVALLQRSHGDRSRGK. N158 carries N-linked (GlcNAc...) asparagine glycosylation. 4 cysteine pairs are disulfide-bonded: C251–C264, C263–C316, C293–C351, and C297–C353.

The protein belongs to the TGF-beta family. The processing of the protein may also occur at the second R-X-X-R site located at AA 132-135. Processing appears to be regulated in a cell-type specific manner.

It is found in the secreted. Required for left-right axis determination as a regulator of LEFTY2 and NODAL. The sequence is that of Left-right determination factor 1 (LEFTY1) from Homo sapiens (Human).